The sequence spans 550 residues: Silent protein UshA(0) (550 aa).

The first 25 residues, methionine 1–alanine 25, serve as a signal peptide directing secretion. 7 residues coordinate a divalent metal cation: aspartate 41, histidine 43, aspartate 84, asparagine 116, histidine 217, histidine 252, and glutamine 254. Cysteine 258 and cysteine 275 are disulfide-bonded. Substrate is bound by residues phenylalanine 429 and phenylalanine 498 to aspartate 504.

This sequence belongs to the 5'-nucleotidase family. A divalent metal cation is required as a cofactor.

It is found in the periplasm. This chain is Silent protein UshA(0) (ushA), found in Salmonella typhimurium (strain LT2 / SGSC1412 / ATCC 700720).